An 889-amino-acid chain; its full sequence is Coatomer subunit gamma-2 (889 aa).

5 HEAT repeats span residues 67-102, 103-140, 289-326, 328-360, and 361-398; these read VEAT…SPSA, DEVI…STLL, RELT…THPL, VTNC…TGNE, and SSVD…KFPL. Residues 596-617 form a disordered region; it reads PLAEKKTTGKKPTGPASALSGP.

Belongs to the COPG family. In terms of assembly, oligomeric complex that consists of at least the alpha, beta, beta', gamma, delta, epsilon and zeta subunits.

Its subcellular location is the cytoplasm. The protein resides in the golgi apparatus membrane. The protein localises to the cytoplasmic vesicle. It localises to the COPI-coated vesicle membrane. In terms of biological role, the coatomer is a cytosolic protein complex that binds to dilysine motifs and reversibly associates with Golgi non-clathrin-coated vesicles, which further mediate biosynthetic protein transport from the ER, via the Golgi up to the trans Golgi network. Coatomer complex is required for budding from Golgi membranes, and is essential for the retrograde Golgi-to-ER transport of dilysine-tagged proteins. The chain is Coatomer subunit gamma-2 from Oryza sativa subsp. japonica (Rice).